Here is a 224-residue protein sequence, read N- to C-terminus: EF-hand calcium-binding domain-containing protein 1 (224 aa).

The signal sequence occupies residues M1–S21. In terms of domain architecture, EF-hand spans I115 to D150. Residues D128, D130, D132, E134, and E139 each contribute to the Ca(2+) site.

As to expression, component of the acid-soluble organic matrix of calcified layers of the shell (at protein level).

Its subcellular location is the secreted. This chain is EF-hand calcium-binding domain-containing protein 1, found in Lottia gigantea (Giant owl limpet).